Here is a 530-residue protein sequence, read N- to C-terminus: Bifunctional purine biosynthesis protein PurH (530 aa).

In terms of domain architecture, MGS-like spans 1–147 (MPSIKRALIS…KNWKHVAIVT (147 aa)).

This sequence belongs to the PurH family.

It catalyses the reaction (6R)-10-formyltetrahydrofolate + 5-amino-1-(5-phospho-beta-D-ribosyl)imidazole-4-carboxamide = 5-formamido-1-(5-phospho-D-ribosyl)imidazole-4-carboxamide + (6S)-5,6,7,8-tetrahydrofolate. The catalysed reaction is IMP + H2O = 5-formamido-1-(5-phospho-D-ribosyl)imidazole-4-carboxamide. Its pathway is purine metabolism; IMP biosynthesis via de novo pathway; 5-formamido-1-(5-phospho-D-ribosyl)imidazole-4-carboxamide from 5-amino-1-(5-phospho-D-ribosyl)imidazole-4-carboxamide (10-formyl THF route): step 1/1. It functions in the pathway purine metabolism; IMP biosynthesis via de novo pathway; IMP from 5-formamido-1-(5-phospho-D-ribosyl)imidazole-4-carboxamide: step 1/1. This Neisseria meningitidis serogroup A / serotype 4A (strain DSM 15465 / Z2491) protein is Bifunctional purine biosynthesis protein PurH.